The following is a 568-amino-acid chain: Protein disconnected (568 aa).

The tract at residues 16–77 is disordered; it reads GHGPHSHQHV…PRRWGSPPIN (62 aa). Residues 19 to 29 are compositionally biased toward basic residues; sequence PHSHQHVHSHL. Residues 30-45 are compositionally biased toward low complexity; the sequence is PSHPQPNAASPASSPG. A compositionally biased stretch (gly residues) spans 46 to 62; that stretch reads GSSGSGSGSAAGSGTGS. 2 consecutive C2H2-type zinc fingers follow at residues 92–115 and 120–145; these read VQCS…SAVH and HKCT…ANPN. Disordered regions lie at residues 134 to 157, 220 to 364, 391 to 419, and 501 to 568; these read RRSR…RRKI, LLST…SDAF, SSAS…DSDS, and QQYN…PISV. Acidic residues predominate over residues 235–246; it reads NEQDADPEDDND. Residues 253-263 show a composition bias toward polar residues; it reads QANSSSPAASS. Over residues 282–292 the composition is skewed to low complexity; the sequence is SLSLASSSSIA. A compositionally biased stretch (basic and acidic residues) spans 313-360; it reads SEQDREQEQEQEQEREREAEKEQEQDVESDKEHEPEQEHELEREKRSP. Low complexity predominate over residues 391–402; that stretch reads SSASSSSASASA. Residues 520 to 550 are compositionally biased toward basic residues; the sequence is HLTLSHHHQEQHHHLGHHHMGHHHHHHHQHH. Over residues 558–568 the composition is skewed to polar residues; that stretch reads SPAATNAPISV.

As to expression, expressed at low levels in the adult head and very low, but detectable, levels in the body.

It localises to the nucleus. Functionally, required for the establishment of stable connections between the larval optic nerves, the Bolwig's nerves, and their target cells in the brain during embryonic development. The sequence is that of Protein disconnected (disco) from Drosophila melanogaster (Fruit fly).